The primary structure comprises 452 residues: tRNA modification GTPase MnmE (452 aa).

Residues Arg-22, Glu-80, and Lys-119 each contribute to the (6S)-5-formyl-5,6,7,8-tetrahydrofolate site. Positions 213–375 constitute a TrmE-type G domain; that stretch reads GVRTVIVGKP…LENKIYEKFF (163 aa). Asn-223 contacts K(+). Residues 223-228, 242-248, and 267-270 contribute to the GTP site; these read NSGKST, TDIPGTT, and DTAG. Ser-227 provides a ligand contact to Mg(2+). Residues Thr-242, Ile-244, and Thr-247 each coordinate K(+). Thr-248 lines the Mg(2+) pocket. (6S)-5-formyl-5,6,7,8-tetrahydrofolate is bound at residue Lys-452.

Belongs to the TRAFAC class TrmE-Era-EngA-EngB-Septin-like GTPase superfamily. TrmE GTPase family. In terms of assembly, homodimer. Heterotetramer of two MnmE and two MnmG subunits. K(+) is required as a cofactor.

Its subcellular location is the cytoplasm. Its function is as follows. Exhibits a very high intrinsic GTPase hydrolysis rate. Involved in the addition of a carboxymethylaminomethyl (cmnm) group at the wobble position (U34) of certain tRNAs, forming tRNA-cmnm(5)s(2)U34. The sequence is that of tRNA modification GTPase MnmE from Petrotoga mobilis (strain DSM 10674 / SJ95).